Reading from the N-terminus, the 432-residue chain is Short/branched chain specific acyl-CoA dehydrogenase, mitochondrial (432 aa).

The N-terminal 33 residues, 1 to 33 (MERATVRLLRGGALLRRNFPSCLSSWKTPPHAL), are a transit peptide targeting the mitochondrion. N6-acetyllysine; alternate is present on Lys-70. Lys-70 is subject to N6-succinyllysine; alternate. FAD is bound by residues 174 to 183 (ICISETGAGS) and 207 to 209 (WIS). Ser-183 contacts substrate. Ser-183 is subject to Phosphoserine. Substrate is bound by residues Tyr-229 and Tyr-283. The residue at position 284 (Lys-284) is an N6-acetyllysine; alternate. Lys-284 carries the N6-succinyllysine; alternate modification. 291–294 (NEGR) contacts substrate. FAD contacts are provided by residues Arg-319, Gln-330, and 387 to 391 (EWMGG). The active-site Proton acceptor is the Glu-414. An FAD-binding site is contributed by 416–418 (TSN). Lys-426 bears the N6-acetyllysine mark.

The protein belongs to the acyl-CoA dehydrogenase family. In terms of assembly, homotetramer. The cofactor is FAD.

Its subcellular location is the mitochondrion matrix. It catalyses the reaction 2-methylbutanoyl-CoA + oxidized [electron-transfer flavoprotein] + H(+) = (2E)-2-methylbut-2-enoyl-CoA + reduced [electron-transfer flavoprotein]. The enzyme catalyses (2S)-2-methylbutanoyl-CoA + oxidized [electron-transfer flavoprotein] + H(+) = (2E)-2-methylbut-2-enoyl-CoA + reduced [electron-transfer flavoprotein]. The catalysed reaction is (2R)-2-methylbutanoyl-CoA + oxidized [electron-transfer flavoprotein] + H(+) = ethylacryloyl-CoA + reduced [electron-transfer flavoprotein]. It carries out the reaction butanoyl-CoA + oxidized [electron-transfer flavoprotein] + H(+) = (2E)-butenoyl-CoA + reduced [electron-transfer flavoprotein]. It catalyses the reaction 2-methylpropanoyl-CoA + oxidized [electron-transfer flavoprotein] + H(+) = 2-methylpropenoyl-CoA + reduced [electron-transfer flavoprotein]. The enzyme catalyses hexanoyl-CoA + oxidized [electron-transfer flavoprotein] + H(+) = (2E)-hexenoyl-CoA + reduced [electron-transfer flavoprotein]. The catalysed reaction is valproyl-CoA + oxidized [electron-transfer flavoprotein] + H(+) = (2E)-2-propylpent-2-enoyl-CoA + reduced [electron-transfer flavoprotein]. Its pathway is lipid metabolism; mitochondrial fatty acid beta-oxidation. It functions in the pathway amino-acid degradation; L-isoleucine degradation. Its function is as follows. Short and branched chain specific acyl-CoA dehydrogenase that catalyzes the removal of one hydrogen from C-2 and C-3 of the fatty acyl-CoA thioester, resulting in the formation of trans-2-enoyl-CoA. Among the different mitochondrial acyl-CoA dehydrogenases, acts specifically on short and branched chain acyl-CoA derivatives such as (S)-2-methylbutyryl-CoA as well as short straight chain acyl-CoAs such as butyryl-CoA. Plays an important role in the metabolism of L-isoleucine by catalyzing the dehydrogenation of 2-methylbutyryl-CoA, one of the steps of the L-isoleucine catabolic pathway. Can also act on valproyl-CoA, a metabolite of the valproic acid drug. The chain is Short/branched chain specific acyl-CoA dehydrogenase, mitochondrial (ACADSB) from Bos taurus (Bovine).